The following is a 161-amino-acid chain: Protein-export protein SecB (161 aa).

The protein belongs to the SecB family. Homotetramer, a dimer of dimers. One homotetramer interacts with 1 SecA dimer.

Its subcellular location is the cytoplasm. Functionally, one of the proteins required for the normal export of preproteins out of the cell cytoplasm. It is a molecular chaperone that binds to a subset of precursor proteins, maintaining them in a translocation-competent state. It also specifically binds to its receptor SecA. This is Protein-export protein SecB from Shewanella sp. (strain ANA-3).